We begin with the raw amino-acid sequence, 385 residues long: Lipid-A-disaccharide synthase 2 (385 aa).

It belongs to the LpxB family.

It catalyses the reaction a lipid X + a UDP-2-N,3-O-bis[(3R)-3-hydroxyacyl]-alpha-D-glucosamine = a lipid A disaccharide + UDP + H(+). The protein operates within bacterial outer membrane biogenesis; LPS lipid A biosynthesis. Functionally, condensation of UDP-2,3-diacylglucosamine and 2,3-diacylglucosamine-1-phosphate to form lipid A disaccharide, a precursor of lipid A, a phosphorylated glycolipid that anchors the lipopolysaccharide to the outer membrane of the cell. The sequence is that of Lipid-A-disaccharide synthase 2 from Legionella pneumophila (strain Paris).